The chain runs to 129 residues: Large ribosomal subunit protein bL17 (129 aa).

Belongs to the bacterial ribosomal protein bL17 family. In terms of assembly, part of the 50S ribosomal subunit. Contacts protein L32.

This is Large ribosomal subunit protein bL17 from Yersinia enterocolitica serotype O:8 / biotype 1B (strain NCTC 13174 / 8081).